A 580-amino-acid chain; its full sequence is MHLSAVLNALLVSVLAAVLWKHVRLREHAASLEEELAVGRRAADPAPALRIDYPKALQILTEGGTHMVCTGRTHTDRLCRFKWLCYSSEAEEFIFFHGNASVMLPSLGSRRFQPALLDLSTVEDHNTQYFNFVELPAAALRFMPKPVFVPDVALIANRFNPDNLMHVFHDDLLPLFYTLRQFPGLAREARLFFMEGWGEGAHFDLYKLLSPKQPLLRAQLKALGRLLCFSHAFVGLSKVTTWYQYGFVQPQGPKANILVSGNEIRQFAHFLMEKLNVSQAGGPLGEEYILVFSRTQNRLILNEAELLLALAQEFQMKTVTVSLEDHAFADVVRLVSNASMLVSMHGAQLVTALFLPRGAAVVELFPYAVNPDHYTPYKTLATLPGMDLQYIAWQNTMPENTVTHPERPWDQGGIAHLDRAEQARILQSREVPRHLCCRNPEWLFRIYQDTKVDIPSLIQTIRRVVKGHPGPRKQKWTVSLYPGKVREARCQASVQGASEARLSVSWQIPWNLKYLKVREVKYEVWLQEQGENTYVPYMLALQNHTFTENIKPFTTYLVWIRCIFNKTLLGPFADVLVCST.

Over 1 to 4 the chain is Cytoplasmic; the sequence is MHLS. Residues 5–25 traverse the membrane as a helical; Signal-anchor for type II membrane protein segment; it reads AVLNALLVSVLAAVLWKHVRL. At 26–580 the chain is on the lumenal side; it reads REHAASLEEE…PFADVLVCST (555 aa). 2 N-linked (GlcNAc...) asparagine glycosylation sites follow: asparagine 99 and asparagine 276. Residues 488–580 form the Fibronectin type-III domain; it reads ARCQASVQGA…PFADVLVCST (93 aa).

Belongs to the glycosyltransferase 61 family.

Its subcellular location is the endoplasmic reticulum membrane. The enzyme catalyses 3-O-(alpha-D-mannosyl)-L-threonyl-[protein] + UDP-N-acetyl-alpha-D-glucosamine = 3-O-(N-acetyl-beta-D-glucosaminyl-(1-&gt;4)-alpha-D-mannosyl)-L-threonyl-[protein] + UDP + H(+). The protein operates within protein modification; protein glycosylation. In terms of biological role, O-linked mannose beta-1,4-N-acetylglucosaminyltransferase that transfers UDP-N-acetyl-D-glucosamine to the 4-position of the mannose to generate N-acetyl-D-glucosamine-beta-1,4-O-D-mannosylprotein. Involved in the biosynthesis of the phosphorylated O-mannosyl trisaccharide (N-acetylgalactosamine-beta-3-N-acetylglucosamine-beta-4-(phosphate-6-)mannose), a carbohydrate structure present in alpha-dystroglycan (DAG1), which is required for binding laminin G-like domain-containing extracellular proteins with high affinity. The polypeptide is Protein O-linked-mannose beta-1,4-N-acetylglucosaminyltransferase 2 (POMGNT2) (Bos taurus (Bovine)).